A 450-amino-acid polypeptide reads, in one-letter code: MAQFYSPNRRVTTRKAVPAKNLTVTVASLDPFGQGVARHEGKTVFVTGVLPGEQAEVQLTEEKRQFSHAKLKRLLTPSPQRVEPPCPHFTRCGGCQQQHAEITLQQSSKTAALMRMMTRETGIELSAASLIAGTPYAYRRRARLALYFQAKEQRLLMGYRQSNSHDLVDIKACPVLRPELEALLQPLRDCLSQLSAVKRLGHVELVQAENGPLLVLRHLDPLHPADEQALRDFAQRQGVSVYLAPDAESLTCLHGEEPVYHVAGLTLAFSPRDFIQVNDAVNQQMVAQALAWLDVQSQDRILDLFCGMGNFTLPLAQRAASVVGVEGVTALVEKGRENARRNALSNVTFFHQNLEDDVTQQPWAAQGFDKILLDPARAGAAGVMEQITRLAPKRVVYVSCNATTLARDSKVLLAAGYRLANVAMLDMFPHTGHLESMALFLHDTGMRKAQ.

The TRAM domain maps to lysine 15–arginine 73. [4Fe-4S] cluster is bound by residues cysteine 86, cysteine 92, cysteine 95, and cysteine 173. S-adenosyl-L-methionine-binding residues include glutamine 276, phenylalanine 305, asparagine 310, glutamate 326, asparagine 353, and aspartate 374. Cysteine 400 serves as the catalytic Nucleophile.

It belongs to the class I-like SAM-binding methyltransferase superfamily. RNA M5U methyltransferase family. RlmD subfamily.

It carries out the reaction uridine(1939) in 23S rRNA + S-adenosyl-L-methionine = 5-methyluridine(1939) in 23S rRNA + S-adenosyl-L-homocysteine + H(+). Functionally, catalyzes the formation of 5-methyl-uridine at position 1939 (m5U1939) in 23S rRNA. The protein is 23S rRNA (uracil(1939)-C(5))-methyltransferase RlmD of Pectobacterium atrosepticum (strain SCRI 1043 / ATCC BAA-672) (Erwinia carotovora subsp. atroseptica).